Consider the following 1153-residue polypeptide: AP-3 complex subunit delta-1 (1153 aa).

Residue A2 is modified to N-acetylalanine. 11 HEAT repeats span residues 34 to 71, 77 to 114, 142 to 179, 180 to 216, 254 to 292, 299 to 336, 338 to 373, 375 to 409, 431 to 468, 497 to 535, and 548 to 585; these read KYIS…LGYD, FNII…LTTN, DLAR…KYPE, SLRP…RNPK, RLGK…SLSS, ASIQ…THPK, VQSH…KKNL, EIVK…QSNY, TRHG…SAHL, QEPH…SILQ, and AVTQ…IQKL. Disordered regions lie at residues 629–696 and 726–920; these read EPLS…YQDT and KLEE…PPES. A phosphoserine mark is found at S632, S634, S636, and S658. Residues 639–675 are compositionally biased toward basic and acidic residues; sequence ERPRAVFHEEEQRRPKHRPSEADEEELARRREARKQE. Residues 659–679 are a coiled coil; sequence EADEEELARRREARKQEQANN. A Phosphoserine modification is found at S688. A coiled-coil region spans residues 725–756; that stretch reads VKLEEERRHRQKLEKDKRRKKRKEKEKKGKRR. Positions 726–740 are enriched in basic and acidic residues; that stretch reads KLEEERRHRQKLEKD. The span at 741-758 shows a compositional bias: basic residues; the sequence is KRRKKRKEKEKKGKRRHS. 2 positions are modified to phosphoserine: S758 and S759. T762 is subject to Phosphothreonine. S764, A785, S788, K828, and S829 each carry phosphoserine. Acidic residues predominate over residues 777-794; sequence VTEEMPENALPSDEDDKD. Over residues 795–839 the composition is skewed to basic and acidic residues; it reads PNDPYRALDIDLDKPLADSEKLPIQKHRNTETSKSPEKDVPMVEK. Composition is skewed to basic residues over residues 840–853 and 863–879; these read KSKK…KHKE and EKEK…KHRK. The stretch at 845 to 869 forms a coiled coil; it reads KKKEKKHKEKERDKEKKKEKEKKKS. Phosphoserine is present on V931.

It belongs to the adaptor complexes large subunit family. AP-3 associates with the BLOC-1 complex. Adaptor protein complex 3 (AP-3) is a heterotetramer composed of two large adaptins (delta-type subunit AP3D1 and beta-type subunit AP3B1 or AP3B2), a medium adaptin (mu-type subunit AP3M1 or AP3M2) and a small adaptin (sigma-type subunit APS1 or AP3S2). Interacts with SLC30A2. Interacts with CLN3 (via dileucine motif); this interaction facilitates lysosomal targeting. In terms of tissue distribution, present in all adult tissues examined with the highest levels in skeletal muscle, heart, pancreas and testis.

Its subcellular location is the cytoplasm. The protein resides in the golgi apparatus membrane. Part of the AP-3 complex, an adaptor-related complex which is not clathrin-associated. The complex is associated with the Golgi region as well as more peripheral structures. It facilitates the budding of vesicles from the Golgi membrane and may be directly involved in trafficking to lysosomes. Involved in process of CD8+ T-cell and NK cell degranulation. In concert with the BLOC-1 complex, AP-3 is required to target cargos into vesicles assembled at cell bodies for delivery into neurites and nerve terminals. In Homo sapiens (Human), this protein is AP-3 complex subunit delta-1 (AP3D1).